The primary structure comprises 237 residues: ATP-dependent dethiobiotin synthetase BioD (237 aa).

12 to 17 serves as a coordination point for ATP; it reads DAGKTL. Mg(2+) is bound at residue threonine 16. The active site involves lysine 37. Serine 41 is a binding site for substrate. Residues aspartate 54, 116–119, and 213–215 contribute to the ATP site; these read EGAG and PRL. 2 residues coordinate Mg(2+): aspartate 54 and glutamate 116.

It belongs to the dethiobiotin synthetase family. As to quaternary structure, homodimer. It depends on Mg(2+) as a cofactor.

The protein resides in the cytoplasm. The enzyme catalyses (7R,8S)-7,8-diammoniononanoate + CO2 + ATP = (4R,5S)-dethiobiotin + ADP + phosphate + 3 H(+). The protein operates within cofactor biosynthesis; biotin biosynthesis; biotin from 7,8-diaminononanoate: step 1/2. Catalyzes a mechanistically unusual reaction, the ATP-dependent insertion of CO2 between the N7 and N8 nitrogen atoms of 7,8-diaminopelargonic acid (DAPA, also called 7,8-diammoniononanoate) to form a ureido ring. The protein is ATP-dependent dethiobiotin synthetase BioD of Chromohalobacter salexigens (strain ATCC BAA-138 / DSM 3043 / CIP 106854 / NCIMB 13768 / 1H11).